The sequence spans 338 residues: Eukaryotic translation initiation factor 3 subunit H (338 aa).

The region spanning 22–154 (VQCDGLAVMK…LKAYRLTPQA (133 aa)) is the MPN domain.

It belongs to the eIF-3 subunit H family. As to quaternary structure, component of the eukaryotic translation initiation factor 3 (eIF-3) complex. The eIF-3 complex interacts with pix. Interacts with mxt.

Its subcellular location is the cytoplasm. In terms of biological role, component of the eukaryotic translation initiation factor 3 (eIF-3) complex, which is involved in protein synthesis of a specialized repertoire of mRNAs and, together with other initiation factors, stimulates binding of mRNA and methionyl-tRNAi to the 40S ribosome. The eIF-3 complex specifically targets and initiates translation of a subset of mRNAs involved in cell proliferation. The polypeptide is Eukaryotic translation initiation factor 3 subunit H (Drosophila erecta (Fruit fly)).